The following is a 211-amino-acid chain: Dual specificity protein phosphatase 26 (211 aa).

The 148-residue stretch at 60 to 207 (NHADEVWPGL…LLALDRRLRQ (148 aa)) folds into the Tyrosine-protein phosphatase domain. The active-site Phosphocysteine intermediate is cysteine 152.

It belongs to the protein-tyrosine phosphatase family. Non-receptor class dual specificity subfamily. As to quaternary structure, interacts with HSF4. As to expression, brain. In the brain it is expressed ubiquitously except in the hippocampus. Expressed in embryonal cancers (retinoblastoma, neuroepithilioma and neuroblastoma) and in anaplatic thyroid cancer.

The protein resides in the cytoplasm. Its subcellular location is the nucleus. The protein localises to the golgi apparatus. The enzyme catalyses O-phospho-L-tyrosyl-[protein] + H2O = L-tyrosyl-[protein] + phosphate. It catalyses the reaction O-phospho-L-seryl-[protein] + H2O = L-seryl-[protein] + phosphate. It carries out the reaction O-phospho-L-threonyl-[protein] + H2O = L-threonyl-[protein] + phosphate. Functionally, inactivates MAPK1 and MAPK3 which leads to dephosphorylation of heat shock factor protein 4 and a reduction in its DNA-binding activity. Inhibits MAP kinase p38 by dephosphorylating it and inhibits p38-mediated apoptosis in anaplastic thyroid cancer cells. Can also induce activation of MAP kinase p38 and c-Jun N-terminal kinase (JNK). The chain is Dual specificity protein phosphatase 26 (DUSP26) from Homo sapiens (Human).